The primary structure comprises 287 residues: Protease HtpX (287 aa).

A run of 2 helical transmembrane segments spans residues 4–24 (IFLLIATNLAVLLVASIVMSI) and 33–53 (GGLLVFAAIFGFGGAFISLAI). His-139 provides a ligand contact to Zn(2+). The active site involves Glu-140. His-143 contributes to the Zn(2+) binding site. A run of 2 helical transmembrane segments spans residues 154 to 174 (LIQGVVNTFVIFAARVVAGII) and 195 to 215 (AVVFVLDMLFGILASIIVAYF). Position 220 (Glu-220) interacts with Zn(2+).

The protein belongs to the peptidase M48B family. Zn(2+) is required as a cofactor.

The protein localises to the cell inner membrane. The protein is Protease HtpX of Shewanella baltica (strain OS185).